A 62-amino-acid polypeptide reads, in one-letter code: Short neurotoxin 1 (62 aa).

Positions 1–16 (LECHNQQSIQTPTTTG) are enriched in polar residues. The interval 1 to 20 (LECHNQQSIQTPTTTGCSGG) is disordered. 4 disulfide bridges follow: cysteine 3–cysteine 24, cysteine 17–cysteine 41, cysteine 43–cysteine 54, and cysteine 55–cysteine 60.

Belongs to the three-finger toxin family. Short-chain subfamily. Type I alpha-neurotoxin sub-subfamily. As to expression, expressed by the venom gland.

The protein resides in the secreted. Functionally, binds to muscle nicotinic acetylcholine receptor (nAChR) and inhibit acetylcholine from binding to the receptor, thereby impairing neuromuscular transmission. This is Short neurotoxin 1 from Naja kaouthia (Monocled cobra).